Here is a 271-residue protein sequence, read N- to C-terminus: Putative pyruvate, phosphate dikinase regulatory protein (271 aa).

G147–T154 is an ADP binding site.

Belongs to the pyruvate, phosphate/water dikinase regulatory protein family. PDRP subfamily.

It catalyses the reaction N(tele)-phospho-L-histidyl/L-threonyl-[pyruvate, phosphate dikinase] + ADP = N(tele)-phospho-L-histidyl/O-phospho-L-threonyl-[pyruvate, phosphate dikinase] + AMP + H(+). It carries out the reaction N(tele)-phospho-L-histidyl/O-phospho-L-threonyl-[pyruvate, phosphate dikinase] + phosphate + H(+) = N(tele)-phospho-L-histidyl/L-threonyl-[pyruvate, phosphate dikinase] + diphosphate. In terms of biological role, bifunctional serine/threonine kinase and phosphorylase involved in the regulation of the pyruvate, phosphate dikinase (PPDK) by catalyzing its phosphorylation/dephosphorylation. The chain is Putative pyruvate, phosphate dikinase regulatory protein from Clostridium tetani (strain Massachusetts / E88).